Consider the following 237-residue polypeptide: Pre-protein VI (237 aa).

The propeptide occupies 1–32 (MDDPFSTLAPRRGTQPLLSNWATIGISELHGG). The segment at 33 to 57 (ALGWGSWWSNLSRLGSSFGSNLKNL) is amphipathic alpha-helix essential for membrane lytic activity. Positions 35-56 (GWGSWWSNLSRLGSSFGSNLKN) are involved in endosomal membrane lysis. An interaction with hexon protein region spans residues 51 to 77 (GSNLKNLGLKAWNSSTGQALRQHLKDT). A Nuclear export signal motif is present at residues 70–79 (LRQHLKDTNL). Thr146 is subject to Phosphothreonine; by host. A Nuclear export signal motif is present at residues 218–229 (GTLDSIMGLGLQ). Residues 220 to 226 (LDSIMGL) form an interaction with hexon protein region. The interval 227–237 (GLQPIKRRRCF) is binds to importin alpha/beta, involved in hexon nuclear import. The Nuclear localization signal motif lies at 232-235 (KRRR).

The protein belongs to the adenoviridae protein VI family. As to quaternary structure, interacts with hexon protein; this interaction allows nuclear import of hexon trimers and possibly pre-capsid assembly. Interacts (via C-terminal NLS) with importin alpha/beta. In terms of assembly, interacts (via PPxY motif) with host NEDD4 ubiquitine ligase; this interaction might play a role in virus intracellular transport during entry. Part of a complex composed of the core-capsid bridging protein, the endosome lysis protein VI and the hexon-linking protein VIII; these interactions bridge the virus core to the capsid. Interacts with peripentonal hexons; this interaction stabilizes the capsid by gluing two peripentonal hexons together and joining them with an adjacent group-of-nine hexon. Heterodimer with the viral protease; disulfide-linked. Interacts with the viral protease. Ubiquitinated by Nedd4 following partial capsid disassembly; which might play a role in intracellular virus movement during entry. Post-translationally, contains the major nuclear import and export signals. Proteolytically removed during virion maturation. The processing of the C-terminus turns the precursor into a mature viral structural protein and abrogates its ability to promote hexon import and act as a potential chaperone protein.

Its subcellular location is the host nucleus. It localises to the host cytoplasm. It is found in the virion. In terms of biological role, during virus assembly, promotes hexon trimers nuclear import through nuclear pore complexes via an importin alpha/beta-dependent mechanism. By analogy to herpesviruses capsid assembly, might act as a chaperone to promote the formation of the icosahedral capsid. Functionally, structural component of the virion that provides increased stability to the particle shell through its interaction with the core-capsid bridging protein and the hexon-linking protein VIII. Fibers shedding during virus entry into host cell allows the endosome lysis protein to be exposed as a membrane-lytic peptide. Exhibits pH-independent membrane fragmentation activity and probably mediates viral rapid escape from host endosome via organellar membrane lysis. It is not clear if it then remains partially associated with the capsid and involved in the intracellular microtubule-dependent transport of capsid to the nucleus, or if it is lost during endosomal penetration. Cofactor that activates the viral protease. Binds to viral protease in a 1:1 ratio. The sequence is that of Pre-protein VI from Mus musculus (Mouse).